The chain runs to 262 residues: MTYLAKILKEKRREVAAIKAERPLARYLELRSSLAPARGFQEALRGEDGRLRLIAEVKKASPSRGVIVHDFDPVRIALHYEEIGASALSVLTDRQFFQGSPDYLRAVSAAVRLPVLRKDFIVDESQIFESRLMGADAILLIVAALEPRQLRDYLQTASETGLDVLVEVHDRRELDTAAEEGATMIGVNNRNLKDFSVDPATSSDLRPFFPPDTIAVSESGLKTAGDIAHLRDAGFHAVLIGEGLQTSKELTGLTWPVSHSLS.

This sequence belongs to the TrpC family.

It catalyses the reaction 1-(2-carboxyphenylamino)-1-deoxy-D-ribulose 5-phosphate + H(+) = (1S,2R)-1-C-(indol-3-yl)glycerol 3-phosphate + CO2 + H2O. Its pathway is amino-acid biosynthesis; L-tryptophan biosynthesis; L-tryptophan from chorismate: step 4/5. In Chlorobium luteolum (strain DSM 273 / BCRC 81028 / 2530) (Pelodictyon luteolum), this protein is Indole-3-glycerol phosphate synthase.